The sequence spans 274 residues: Putative ABC transporter ATP-binding protein MM_1037 (274 aa).

The region spanning 2–235 (IRLENVSYCY…PSLKDLGLTP (234 aa)) is the ABC transporter domain. 35-42 (GRNGSGKS) lines the ATP pocket.

The protein belongs to the ABC transporter superfamily.

It localises to the cell membrane. In terms of biological role, probably part of an ABC transporter complex. Responsible for energy coupling to the transport system. The sequence is that of Putative ABC transporter ATP-binding protein MM_1037 from Methanosarcina mazei (strain ATCC BAA-159 / DSM 3647 / Goe1 / Go1 / JCM 11833 / OCM 88) (Methanosarcina frisia).